We begin with the raw amino-acid sequence, 20 residues long: Agglutinin beta-3 chain (20 aa).

It belongs to the jacalin lectin family. In terms of assembly, tetramer of four alpha chains associated with two or four beta chains.

Functionally, D-galactose-specific lectin, binds the T-antigen structure Gal-beta1,3-GalNAc (Thomsen-Friedenreich-antigen-specific lectin). Potent and selective stimulant of distinct T- and B-cell functions. Shows a unique ability to specifically recognize IgA-1 from human serum. This chain is Agglutinin beta-3 chain, found in Artocarpus integer (Jack fruit).